Consider the following 296-residue polypeptide: 6-hydroxypseudooxynicotine dehydrogenase complex subunit alpha (296 aa).

The FAD-binding PCMH-type domain occupies 1-177; the sequence is MKPPSFDYVV…VEVNVPQLPH (177 aa). Residues 30–37, 111–115, and Glu124 each bind FAD; these read IIAGGQSL and TIGGS.

As to quaternary structure, heterohexamer of 2 alpha (kdhA), 2 beta (kdhB) and 2 gamma (kdhC) subunit. Dimer of heterotrimers. FAD is required as a cofactor.

It catalyses the reaction 6-hydroxypseudooxynicotine + A + H2O = 2,6-dihydroxypseudooxynicotine + AH2. The protein operates within alkaloid degradation; nicotine degradation. Its function is as follows. Molybdo-flavoprotein enzyme complex involved in nicotine degradation. The subunit gamma (large subunit) contains the substrate-binding sites, the subunit alpha (medium subunit) binds FAD and the subunit beta (small subunit) has a 2Fe-2S ferredoxin-type domain which binds 2 2Fe-2S clusters. This Paenarthrobacter nicotinovorans (Arthrobacter nicotinovorans) protein is 6-hydroxypseudooxynicotine dehydrogenase complex subunit alpha (kdhA).